A 201-amino-acid chain; its full sequence is Phosphoprotein (201 aa).

Residues 1 to 70 (MATRPSSLVD…DQRTGREQLS (70 aa)) are disordered. 2 short sequence motifs (nuclear localization signal) span residues 29 to 36 (PRPRKIPR) and 181 to 193 (PPRI…SAPT).

Homomultimer; only active in its oligomeric state. Interacts with nucleoprotein/N. Interacts with matrix/M protein. Interacts with host TBK1. Interacts with polymerase L. Interacts with host HMGB1; this interaction is required to stabilize RNP on chromosomes. Post-translationally, phosphorylated by host PKC epsilon and casein kinase II.

The protein resides in the host nucleus. It is found in the host cytoplasm. Essential component of the RNA polymerase transcription and replication complex. Acts as a scaffold which brings L in close proximity to the N-RNA complex. Plays a role in the segregation of the viral genome in host daughter cells during mitosis by interacting with host HMGB1, a host chromatin-remodeling DNA architectural protein, thereby stabilizing RNP on chromosomes. Interacts with host TBK1 and thus interferes with activation of cellular antiviral state. Inhibits cellular histone acetyltransferase activities. The sequence is that of Phosphoprotein (P/X) from Bos taurus (Bovine).